The sequence spans 730 residues: MSPWQPLLLALLAFGCSSAAPYQRQPTFVVFPKDLKTSNLTDTQLAEAYLYRYGYTRAAQMMGEKQSLRPALLMLQKQLSLPQTGELDSQTLKAIRTPRCGVPDVGRFQTFKGLKWDHHNITYWIQNYSEDLPRDMIDDAFARAFAVWGEVAPLTFTRVYGPEADIVIQFGVAEHGDGYPFDGKDGLLAHAFPPGAGVQGDAHFDDDELWSLGKGVVIPTYYGNSNGAPCHFPFTFEGRSYSACTTDGRNDGTPWCSTTADYDKDGKFGFCPSERLYTEHGNGEGKPCVFPFIFEGRSYSACTTKGRSDGYRWCATTANYDQDKLYGFCPTRVDATVVGGNSAGELCVFPFVFLGKQYSSCTSDGRRDGRLWCATTSNFDTDKKWGFCPDQGYSLFLVAAHEFGHALGLDHSSVPEALMYPLYSYLEGFPLNKDDIDGIQYLYGRGSKPDPRPPATTTTEPQPTAPPTMCPTIPPTAYPTVGPTVGPTGAPSPGPTSSPSPGPTGAPSPGPTAPPTAGSSEASTESLSPADNPCNVDVFDAIAEIQGALHFFKDGWYWKFLNHRGSPLQGPFLTARTWPALPATLDSAFEDPQTKRVFFFSGRQMWVYTGKTVLGPRSLDKLGLGPEVTHVSGLLPRRLGKALLFSKGRVWRFDLKSQKVDPQSVIRVDKEFSGVPWNSHDIFQYQDKAYFCHGKFFWRVSFQNEVNKVDHEVNQVDDVGYVTYDLLQCP.

The signal sequence occupies residues 1 to 19 (MSPWQPLLLALLAFGCSSA). A propeptide spans 20–107 (APYQRQPTFV…PRCGVPDVGR (88 aa)) (activation peptide). Residue N39 is glycosylated (N-linked (GlcNAc...) asparagine). A Cysteine switch motif is present at residues 98-105 (PRCGVPDV). C100 contacts Zn(2+). Residues N120 and N127 are each glycosylated (N-linked (GlcNAc...) asparagine). Ca(2+) is bound by residues D131 and D165. 2 residues coordinate Zn(2+): H175 and D177. Residues D182, G183, D185, and L187 each coordinate Ca(2+). H190 serves as a coordination point for Zn(2+). G197, Q199, and D201 together coordinate Ca(2+). H203 lines the Zn(2+) pocket. Residues D205, D206, and E208 each coordinate Ca(2+). 3 consecutive Fibronectin type-II domains span residues 225–273 (SNGA…FCPS), 283–331 (GEGK…FCPT), and 342–390 (SAGE…FCPD). 6 cysteine pairs are disulfide-bonded: C230–C256, C244–C271, C288–C314, C302–C329, C347–C373, and C361–C388. Residue H401 participates in Zn(2+) binding. The active site involves E402. Positions 405 and 411 each coordinate Zn(2+). The disordered stretch occupies residues 442–529 (LYGRGSKPDP…SEASTESLSP (88 aa)). The span at 463 to 477 (PTAPPTMCPTIPPTA) shows a compositional bias: pro residues. Residues 478 to 489 (YPTVGPTVGPTG) are compositionally biased toward low complexity. Over residues 490-514 (APSPGPTSSPSPGPTGAPSPGPTAP) the composition is skewed to pro residues. An intrachain disulfide couples C534 to C729. 4 Hemopexin repeats span residues 536–581 (VDVF…WPAL), 582–626 (PATL…GLGP), 628–675 (VTHV…FSGV), and 676–729 (PWNS…LLQC).

The protein belongs to the peptidase M10A family. As to quaternary structure, exists as monomer or homodimer; disulfide-linked. Also exists as heterodimer with LCN2. Macrophages and transformed cell lines produce only the monomeric form. Interacts with ECM1. Zn(2+) serves as cofactor. Ca(2+) is required as a cofactor. In terms of processing, N- and O-glycosylated.

Its subcellular location is the secreted. The protein localises to the extracellular space. It localises to the extracellular matrix. It catalyses the reaction Cleavage of gelatin types I and V and collagen types IV and V.. With respect to regulation, inhibited by histatin-3 1/24 (histatin-5). Inhibited by ECM1. Its function is as follows. Matrix metalloproteinase that plays an essential role in local proteolysis of the extracellular matrix and in leukocyte migration. Could play a role in bone osteoclastic resorption. Cleaves KiSS1 at a Gly-|-Leu bond. Cleaves NINJ1 to generate the Secreted ninjurin-1 form. Cleaves type IV and type V collagen into large C-terminal three quarter fragments and shorter N-terminal one quarter fragments. Degrades fibronectin but not laminin or Pz-peptide. In Mus musculus (Mouse), this protein is Matrix metalloproteinase-9 (Mmp9).